The following is a 150-amino-acid chain: Meiotic expression up-regulated protein 15 (150 aa).

This chain is Meiotic expression up-regulated protein 15 (meu15), found in Schizosaccharomyces pombe (strain 972 / ATCC 24843) (Fission yeast).